The primary structure comprises 357 residues: Cinnamyl alcohol dehydrogenase 1 (357 aa).

One can recognise an Enoyl reductase (ER) domain in the interval 20–348 (GILSPYTYTL…KNDVRYRFVV (329 aa)). Cys-47 contacts Zn(2+). NADP(+) is bound at residue Ser-49. Zn(2+) contacts are provided by His-69, Glu-70, Cys-100, Cys-103, Cys-106, Cys-114, and Cys-163. NADP(+) contacts are provided by residues Thr-167, 188 to 193 (GLGGVG), 211 to 216 (SSSDKK), Thr-251, Gly-275, and 298 to 300 (SFI).

Belongs to the zinc-containing alcohol dehydrogenase family. In terms of assembly, homodimer. Zn(2+) serves as cofactor. Accumulates mainly in the placenta of red fruits, and, to a lower extent, in green fruits placenta, pericarp and seeds.

Its subcellular location is the cytoplasm. It catalyses the reaction (E)-cinnamyl alcohol + NADP(+) = (E)-cinnamaldehyde + NADPH + H(+). The enzyme catalyses (E)-coniferol + NADP(+) = (E)-coniferaldehyde + NADPH + H(+). It carries out the reaction (E)-sinapyl alcohol + NADP(+) = (E)-sinapaldehyde + NADPH + H(+). The catalysed reaction is (E)-4-coumaroyl alcohol + NADP(+) = (E)-4-coumaraldehyde + NADPH + H(+). It catalyses the reaction (E)-caffeyl alcohol + NADP(+) = (E)-caffeyl aldehyde + NADPH + H(+). The enzyme catalyses vanillin + NADPH + H(+) = 4-hydroxy-3-methoxy-benzenemethanol + NADP(+). It participates in aromatic compound metabolism; phenylpropanoid biosynthesis. With respect to regulation, inhibited, in a concentration-dependent manner, by N-(O-hydroxyphenyl) sulfinamoyltertiobutyl acetate (OHPAS), a specific cinnamyl alcohol dehydrogenase (CAD) inhibitor, as well as by ethylenediaminetetraacetic acid (EDTA), a metalloenzyme inhibitor. Involved in the biosynthesis of capsinoids natural products (e.g. capsiate), non-pungent alkaloids synthesized from phenylpropanoid intermediates in the placental tissue of sweet chili pepper fruit acting as repellant on herbivorous mammals. Catalyzes the reduction of vanillin to generate vanillyl alcohol, a precursor of capsiate, a non-pungent component that accumulates mainly in the placenta of mature red fruits, but also in green fruits to lower levels. Involved in lignin biosynthesis. Catalyzes the final step specific for the production of lignin monomers. Mediates the conversion of cinnamaldehyde and coniferaldehyde to cinnamyl alcohol and coniferyl alcohol, respectively. Catalyzes the NADPH-dependent reduction of 5-hydroxyconiferaldehyde, sinapaldehyde, 4-coumaraldehyde and caffeyl aldehyde to their respective alcohols. In Capsicum annuum (Capsicum pepper), this protein is Cinnamyl alcohol dehydrogenase 1.